The following is a 369-amino-acid chain: Dihydroorotate dehydrogenase (quinone) (369 aa).

Residues 76-80 (AGLDK) and T100 each bind FMN. Substrate is bound at residue K80. Residue 125 to 129 (NRMGF) participates in substrate binding. Positions 154 and 187 each coordinate FMN. A substrate-binding site is contributed by N187. The active-site Nucleophile is the S190. Substrate is bound at residue N192. FMN is bound by residues K232 and S260. 261-262 (NT) is a binding site for substrate. FMN-binding positions include G282, G311, and 332–333 (YS).

Belongs to the dihydroorotate dehydrogenase family. Type 2 subfamily. As to quaternary structure, monomer. FMN is required as a cofactor.

It is found in the cell membrane. The catalysed reaction is (S)-dihydroorotate + a quinone = orotate + a quinol. Its pathway is pyrimidine metabolism; UMP biosynthesis via de novo pathway; orotate from (S)-dihydroorotate (quinone route): step 1/1. Its function is as follows. Catalyzes the conversion of dihydroorotate to orotate with quinone as electron acceptor. In Deinococcus radiodurans (strain ATCC 13939 / DSM 20539 / JCM 16871 / CCUG 27074 / LMG 4051 / NBRC 15346 / NCIMB 9279 / VKM B-1422 / R1), this protein is Dihydroorotate dehydrogenase (quinone) (pyrD).